The following is a 212-amino-acid chain: NADH dehydrogenase [ubiquinone] iron-sulfur protein 8, mitochondrial (212 aa).

The N-terminal 34 residues, 1–34 (MYRLSSSMLPRALAQAMRTGHLNGQSLHSSAVAA), are a transit peptide targeting the mitochondrion. 2 consecutive 4Fe-4S ferredoxin-type domains span residues 104–133 (RRYPSGEERCIACKLCEAICPAQAITIEAE) and 143–172 (TRYDIDMTKCIYCGFCQEACPVDAIVEGPN). Residues Cys-113, Cys-116, Cys-119, Cys-123, Cys-152, Cys-155, Cys-158, and Cys-162 each coordinate [4Fe-4S] cluster.

This sequence belongs to the complex I 23 kDa subunit family. Complex I is composed of 45 different subunits. This is a component of the iron-sulfur (IP) fragment of the enzyme. Interacts with RAB5IF. Requires [4Fe-4S] cluster as cofactor.

The protein localises to the mitochondrion inner membrane. The enzyme catalyses a ubiquinone + NADH + 5 H(+)(in) = a ubiquinol + NAD(+) + 4 H(+)(out). Its function is as follows. Core subunit of the mitochondrial membrane respiratory chain NADH dehydrogenase (Complex I) which catalyzes electron transfer from NADH through the respiratory chain, using ubiquinone as an electron acceptor. Essential for the catalytic activity and assembly of complex I. In Mus musculus (Mouse), this protein is NADH dehydrogenase [ubiquinone] iron-sulfur protein 8, mitochondrial (Ndufs8).